The chain runs to 457 residues: Protein N-terminal amidase (457 aa).

The CN hydrolase domain occupies 19–453 (LKVLVIQLNP…EGAILREVQF (435 aa)). Catalysis depends on E63, which acts as the Proton acceptor. K136 acts as the Proton donor in catalysis. C187 acts as the Nucleophile in catalysis.

This sequence belongs to the carbon-nitrogen hydrolase superfamily.

In terms of biological role, deamidates N-terminal Asn and Gln. Component of a targeting complex in the N-end rule pathway. The protein is Protein N-terminal amidase (NTA1) of Saccharomyces cerevisiae (strain ATCC 204508 / S288c) (Baker's yeast).